The sequence spans 179 residues: Large ribosomal subunit protein uL5c (179 aa).

The protein belongs to the universal ribosomal protein uL5 family. Part of the 50S ribosomal subunit; contacts the 5S rRNA.

Its subcellular location is the plastid. It is found in the organellar chromatophore. In terms of biological role, binds 5S rRNA, forms part of the central protuberance of the 50S subunit. The protein is Large ribosomal subunit protein uL5c (rpl5) of Paulinella chromatophora.